A 284-amino-acid polypeptide reads, in one-letter code: Bifunctional protein FolD (284 aa).

Residues 166–168 (GAS) and I232 contribute to the NADP(+) site.

The protein belongs to the tetrahydrofolate dehydrogenase/cyclohydrolase family. As to quaternary structure, homodimer.

It carries out the reaction (6R)-5,10-methylene-5,6,7,8-tetrahydrofolate + NADP(+) = (6R)-5,10-methenyltetrahydrofolate + NADPH. It catalyses the reaction (6R)-5,10-methenyltetrahydrofolate + H2O = (6R)-10-formyltetrahydrofolate + H(+). It participates in one-carbon metabolism; tetrahydrofolate interconversion. Its function is as follows. Catalyzes the oxidation of 5,10-methylenetetrahydrofolate to 5,10-methenyltetrahydrofolate and then the hydrolysis of 5,10-methenyltetrahydrofolate to 10-formyltetrahydrofolate. This is Bifunctional protein FolD from Pseudomonas paraeruginosa (strain DSM 24068 / PA7) (Pseudomonas aeruginosa (strain PA7)).